Consider the following 397-residue polypeptide: MVKETQYYDILGVKPSASPEEIKKAYRKLALKYHPDKNPDEGEKFKLISQAYEVLSDPKKRDIYDQGGEQAIKEGGSGSPSFSSPMDIFDMFFGGGGRMTRERRGKNVVHQLSVTLEDLYNGITKKLALQKNVICEKCEGIGGKKGSVEKCPLCKGRGMQVHIQQIGPGMVQQIQTVCIECKGQGERINPKDRCENCSGAKVTREKKIIEVHVEKGMKDGQKILFHGEGDQEPELDPGDVIIVLDQKDHSVFQRRGQDLIMKMKIQLSEALCGFKKTIKTLDDRVLVISSKSGEVIKHGDLKCIRNEGMPIYKAPLEKGVMIIQFLVVFPEKQWLSQEKLPQLEALLPPRQKVRITDDMDQVELKEFNPNEQSWRQHREAYEEDDEEPRAGVQCQTA.

The J domain maps to 4-70 (ETQYYDILGV…RDIYDQGGEQ (67 aa)). S18 bears the Phosphoserine mark. Residues 122–206 (GITKKLALQK…CSGAKVTREK (85 aa)) form a CR-type zinc finger. Zn(2+) is bound by residues C135, C138, C151, C154, C178, C181, C194, and C197. 4 CXXCXGXG motif repeats span residues 135–142 (CEKCEGIG), 151–158 (CPLCKGRG), 178–185 (CIECKGQG), and 194–201 (CENCSGAK). A compositionally biased stretch (basic and acidic residues) spans 366–380 (EFNPNEQSWRQHREA). The segment at 366–397 (EFNPNEQSWRQHREAYEEDDEEPRAGVQCQTA) is disordered. C394 carries the post-translational modification Cysteine methyl ester. C394 is lipidated: S-farnesyl cysteine. A propeptide spans 395–397 (QTA) (removed in mature form).

As to expression, specifically expressed in testis and heart.

It is found in the membrane. The protein is DnaJ homolog subfamily A member 4 (Dnaja4) of Mus musculus (Mouse).